The following is a 251-amino-acid chain: Hydroxyacylglutathione hydrolase (251 aa).

Zn(2+)-binding residues include His53, His55, Asp57, His58, His110, Asp127, and His165.

The protein belongs to the metallo-beta-lactamase superfamily. Glyoxalase II family. In terms of assembly, monomer. Zn(2+) serves as cofactor.

It carries out the reaction an S-(2-hydroxyacyl)glutathione + H2O = a 2-hydroxy carboxylate + glutathione + H(+). Its pathway is secondary metabolite metabolism; methylglyoxal degradation; (R)-lactate from methylglyoxal: step 2/2. In terms of biological role, thiolesterase that catalyzes the hydrolysis of S-D-lactoyl-glutathione to form glutathione and D-lactic acid. The protein is Hydroxyacylglutathione hydrolase of Salmonella paratyphi C (strain RKS4594).